The sequence spans 516 residues: Multicopper oxidase CueO (516 aa).

Positions 1–28 (MQRRDFLKYSVALGVASALPLWSRAVFA) form a signal peptide, tat-type signal. Plastocyanin-like domains follow at residues 55 to 165 (GQST…IEDD) and 227 to 292 (PRGW…DNKP). Cu cation-binding residues include His-101, His-103, His-141, and His-143. Positions 355–400 (MDPMLDMMGMQMLMEKYGDQAMAGMDHSQMMGHMGHGNMNHMNHGG) are methionine-rich region. A Plastocyanin-like 3 domain is found at 402–516 (FDFHHANKIN…DTGMMLGFTV (115 aa)). Cu cation-binding residues include His-443, His-446, His-448, His-499, Cys-500, His-501, and His-505.

The protein belongs to the multicopper oxidase family. As to quaternary structure, monomer. The cofactor is Cu cation. In terms of processing, exported by the Tat system. The position of the signal peptide cleavage has been experimentally proven.

It is found in the periplasm. It carries out the reaction 4 Cu(+) + O2 + 4 H(+) = 4 Cu(2+) + 2 H2O. Ferroxidase and phenoloxidase activities are enhanced considerably in the presence of excess copper ions. A labile regulatory copper ion near the T1 copper site is important for the copper associated activation of enzyme activity. Ag(+) acts as a potent inhibitor of oxidase activity by binding at Cu(+) binding sites, blocking Cu(+) substrate binding and oxidation. pPD oxidase activity is strongly inhibited by sodium azide, an inhibitor of the electron transfer. Its function is as follows. Multicopper oxidase involved in copper homeostasis and copper tolerance under aerobic conditions. Is responsible for the oxidation of Cu(+) to the less harmful Cu(2+) in the periplasm, thereby preventing Cu(+) from entering the cytoplasm. Probably primarily functions as a cuprous oxidase in vivo. Functionally, in vitro, in the presence of excess copper ions, exhibits ferroxidase and phenoloxidase activities. Fe(2+) is an excellent substrate in the presence of excess Cu(2+), but is inactive in the absence of Cu(2+). Oxidizes the phenolate iron siderophores enterobactin, 2,3-dihydroxybenzoate (2,3-DHB) and 3-hydroxyanthranilate (3-HAA). Oxidation and thus inactivation of enterobactin could protect cells from the interaction of enterobactin with copper and play a central role as an interface between copper detoxification and iron homeostasis. Also oxidizes a variety of phenolic model substrates, including 2,2'-azinobis(3-ethylbenzthiazolinesulfonic acid) (ABTS), p-phenylenediamine (pPD), 2,6-dimethoxyphenol (2,6-DMP) and 3,4-dihydroxybenzoic acid (3,4-DHB). This Escherichia coli (strain K12) protein is Multicopper oxidase CueO.